The sequence spans 227 residues: MASPSRQPPPGGSGLLQGSRARSYGSLVQSACSPVRERRLEHQLEPGDTLAGLALKYGVTMEQIKRANRLYTNDSIFLKKTLYIPILTEPRDLFNGLDSEEEKDGEEKVHPSNSEVWPHSTERKKQETGAGRANGEVLPTPGQETPTPIHDLSASDFLKKLDSQISLSKKAAAQKLKKGENGVPGEDAGLHLSSPWMQQRAVLGPVPLTRTSRTRTLRDQEDEIFKL.

Residues 1–11 (MASPSRQPPPG) show a composition bias toward pro residues. A disordered region spans residues 1-22 (MASPSRQPPPGGSGLLQGSRAR). Phosphoserine occurs at positions 23 and 33. Residues 40–84 (LEHQLEPGDTLAGLALKYGVTMEQIKRANRLYTNDSIFLKKTLYI) form the LysM domain. The segment at 97-150 (LDSEEEKDGEEKVHPSNSEVWPHSTERKKQETGAGRANGEVLPTPGQETPTPIH) is disordered. S99, S166, S194, and S212 each carry phosphoserine.

In Homo sapiens (Human), this protein is LysM and putative peptidoglycan-binding domain-containing protein 1 (LYSMD1).